The sequence spans 416 residues: CinA-like protein (416 aa).

This sequence belongs to the CinA family.

The chain is CinA-like protein from Nostoc punctiforme (strain ATCC 29133 / PCC 73102).